Reading from the N-terminus, the 286-residue chain is Ribosomal RNA small subunit methyltransferase A (286 aa).

Positions 28, 30, 55, 77, 103, and 123 each coordinate S-adenosyl-L-methionine.

The protein belongs to the class I-like SAM-binding methyltransferase superfamily. rRNA adenine N(6)-methyltransferase family. RsmA subfamily.

It localises to the cytoplasm. The enzyme catalyses adenosine(1518)/adenosine(1519) in 16S rRNA + 4 S-adenosyl-L-methionine = N(6)-dimethyladenosine(1518)/N(6)-dimethyladenosine(1519) in 16S rRNA + 4 S-adenosyl-L-homocysteine + 4 H(+). Specifically dimethylates two adjacent adenosines (A1518 and A1519) in the loop of a conserved hairpin near the 3'-end of 16S rRNA in the 30S particle. May play a critical role in biogenesis of 30S subunits. The chain is Ribosomal RNA small subunit methyltransferase A from Rhodopseudomonas palustris (strain BisB18).